The sequence spans 363 residues: Phosrestin-2 (363 aa).

This sequence belongs to the arrestin family.

The sequence is that of Phosrestin-2 (ARR1) from Calliphora vicina (Blue blowfly).